A 214-amino-acid polypeptide reads, in one-letter code: Orotate phosphoribosyltransferase (214 aa).

Lys-26 contacts 5-phospho-alpha-D-ribose 1-diphosphate. Orotate is bound at residue 34 to 35; the sequence is FF. Residues 72-73, Arg-99, Lys-100, Lys-103, His-105, and 124-132 each bind 5-phospho-alpha-D-ribose 1-diphosphate; these read YK and DDVITAGTA. Orotate contacts are provided by Thr-128 and Arg-156.

It belongs to the purine/pyrimidine phosphoribosyltransferase family. PyrE subfamily. Homodimer. Mg(2+) is required as a cofactor.

It carries out the reaction orotidine 5'-phosphate + diphosphate = orotate + 5-phospho-alpha-D-ribose 1-diphosphate. Its pathway is pyrimidine metabolism; UMP biosynthesis via de novo pathway; UMP from orotate: step 1/2. Its function is as follows. Catalyzes the transfer of a ribosyl phosphate group from 5-phosphoribose 1-diphosphate to orotate, leading to the formation of orotidine monophosphate (OMP). The protein is Orotate phosphoribosyltransferase of Proteus mirabilis (strain HI4320).